A 20-amino-acid chain; its full sequence is Alpha-1B-glycoprotein (20 aa).

The interval 1 to 20 is disordered; the sequence is AVVFDPQPALWAEADTQLEP.

In terms of assembly, interacts with CRISP3. Post-translationally, glycosylated. As to expression, plasma.

It is found in the secreted. The polypeptide is Alpha-1B-glycoprotein (A1BG) (Equus asinus (Donkey)).